The following is a 67-amino-acid chain: Minor structural pilin EpdD (67 aa).

Residues 1-13 (MSVALKKFFSKRG) constitute a propeptide that is removed on maturation. Residues 14–22 (QLSLEFSVL) carry the QXSXEXXXL motif.

In terms of processing, the N-terminus is cleaved by the prepilin peptidase EppA, which recognizes the class III signal sequence. Post-translationally, N-glycosylated. Glycosylation is AglB-dependent. The N-glycosylation does not occur unless the signal peptide has been cleaved first.

The protein resides in the secreted. It is found in the cell surface. The protein localises to the fimbrium. Functionally, minor component of the type IV-like pili. Essential for pili formation. This is Minor structural pilin EpdD from Methanococcus maripaludis (strain DSM 14266 / JCM 13030 / NBRC 101832 / S2 / LL).